The primary structure comprises 409 residues: Putative fatty acyl-CoA reductase 7 (409 aa).

Belongs to the fatty acyl-CoA reductase family.

The protein is Putative fatty acyl-CoA reductase 7 (FAR7) of Arabidopsis thaliana (Mouse-ear cress).